Consider the following 228-residue polypeptide: Dolichyl-phosphate hexose transferase HVO_1613 (228 aa).

It belongs to the glycosyltransferase 2 family.

Glycosyltransferase that adds a monosaccharide to dolichol phosphate, thereby being responsible for generating one of the three monosaccharide-modified dolichol phosphates. The subunit onto which additional sugars are added is not known. This chain is Dolichyl-phosphate hexose transferase HVO_1613, found in Haloferax volcanii (strain ATCC 29605 / DSM 3757 / JCM 8879 / NBRC 14742 / NCIMB 2012 / VKM B-1768 / DS2) (Halobacterium volcanii).